A 293-amino-acid chain; its full sequence is Cell division protein FtsQ (293 aa).

The Cytoplasmic portion of the chain corresponds to 1 to 27; that stretch reads MRPLMRNRASERGVDPAPSRWAWRMQR. The helical transmembrane segment at 28–48 threads the bilayer; the sequence is LLLTPAFLLFLRAGVPVLVLF. The Periplasmic portion of the chain corresponds to 49 to 293; the sequence is GAATWWLSDT…WWEIRQVSRQ (245 aa). A POTRA domain is found at 81–149; the sequence is FMVQLMAVDG…GVLHIDVEPR (69 aa).

This sequence belongs to the FtsQ/DivIB family. FtsQ subfamily.

It is found in the cell inner membrane. Its function is as follows. Essential cell division protein. This is Cell division protein FtsQ from Roseobacter litoralis (strain ATCC 49566 / DSM 6996 / JCM 21268 / NBRC 15278 / OCh 149).